Reading from the N-terminus, the 39-residue chain is Photosystem II reaction center protein L (39 aa).

The chain crosses the membrane as a helical span at residues 18-38 (SLYLGLLLIAVLGILFSSYFF).

This sequence belongs to the PsbL family. In terms of assembly, PSII is composed of 1 copy each of membrane proteins PsbA, PsbB, PsbC, PsbD, PsbE, PsbF, PsbH, PsbI, PsbJ, PsbK, PsbL, PsbM, PsbT, PsbX, PsbY, PsbZ, Psb30/Ycf12, peripheral proteins PsbO, CyanoQ (PsbQ), PsbU, PsbV and a large number of cofactors. It forms dimeric complexes.

Its subcellular location is the cellular thylakoid membrane. Functionally, one of the components of the core complex of photosystem II (PSII). PSII is a light-driven water:plastoquinone oxidoreductase that uses light energy to abstract electrons from H(2)O, generating O(2) and a proton gradient subsequently used for ATP formation. It consists of a core antenna complex that captures photons, and an electron transfer chain that converts photonic excitation into a charge separation. This subunit is found at the monomer-monomer interface and is required for correct PSII assembly and/or dimerization. In Picosynechococcus sp. (strain ATCC 27264 / PCC 7002 / PR-6) (Agmenellum quadruplicatum), this protein is Photosystem II reaction center protein L.